A 334-amino-acid polypeptide reads, in one-letter code: Testis-specific Y-encoded protein 1 (334 aa).

Ser-4 carries the post-translational modification Phosphoserine. 2 disordered regions span residues 27–46 and 96–146; these read LEGEPSVQAPEQSPGAPAGD and NEGE…AERR. Basic and acidic residues-rich tracts occupy residues 96-108 and 115-128; these read NEGEEVKDQKQEG and ELEKNPEQACDSKD.

It belongs to the nucleosome assembly protein (NAP) family. Phosphorylated. As to expression, testis.

It localises to the cytoplasm. It is found in the nucleus. May be involved in sperm differentiation and proliferation. The protein is Testis-specific Y-encoded protein 1 (Tspy1) of Rattus norvegicus (Rat).